The chain runs to 662 residues: Transketolase (662 aa).

His28 is a binding site for substrate. Thiamine diphosphate-binding positions include His68 and 115–117; that span reads GPL. Asp156 provides a ligand contact to Mg(2+). 2 residues coordinate thiamine diphosphate: Gly157 and Asn186. Positions 186 and 188 each coordinate Mg(2+). Substrate-binding residues include His261, Arg356, and Ser383. A thiamine diphosphate-binding site is contributed by His261. The active-site Proton donor is the Glu410. Phe436 serves as a coordination point for thiamine diphosphate. Substrate contacts are provided by His460, Asp468, and Arg519.

This sequence belongs to the transketolase family. Homodimer. Mg(2+) serves as cofactor. The cofactor is Ca(2+). Mn(2+) is required as a cofactor. It depends on Co(2+) as a cofactor. Requires thiamine diphosphate as cofactor.

The catalysed reaction is D-sedoheptulose 7-phosphate + D-glyceraldehyde 3-phosphate = aldehydo-D-ribose 5-phosphate + D-xylulose 5-phosphate. The protein operates within carbohydrate biosynthesis; Calvin cycle. It functions in the pathway carbohydrate degradation; pentose phosphate pathway. Catalyzes the transfer of a two-carbon ketol group from a ketose donor to an aldose acceptor, via a covalent intermediate with the cofactor thiamine pyrophosphate. The chain is Transketolase (tkt) from Staphylococcus epidermidis (strain ATCC 12228 / FDA PCI 1200).